The following is a 110-amino-acid chain: Ferredoxin (110 aa).

2 4Fe-4S ferredoxin-type domains span residues 2–30 (TYIV…YEGE) and 31–60 (FMLV…PESP). [3Fe-4S] cluster contacts are provided by C9 and C17. 4 residues coordinate [4Fe-4S] cluster: C21, C40, C43, and C46. C50 provides a ligand contact to [3Fe-4S] cluster.

It depends on [4Fe-4S] cluster as a cofactor. [3Fe-4S] cluster serves as cofactor.

Ferredoxins are iron-sulfur proteins that transfer electrons in a wide variety of metabolic reactions. In Rickettsia typhi (strain ATCC VR-144 / Wilmington), this protein is Ferredoxin (fdxA).